The chain runs to 429 residues: Histidine--tRNA ligase (429 aa).

This sequence belongs to the class-II aminoacyl-tRNA synthetase family. Homodimer.

The protein localises to the cytoplasm. It carries out the reaction tRNA(His) + L-histidine + ATP = L-histidyl-tRNA(His) + AMP + diphosphate + H(+). The chain is Histidine--tRNA ligase from Pseudomonas syringae pv. tomato (strain ATCC BAA-871 / DC3000).